The sequence spans 380 residues: Cytochrome b (380 aa).

The next 4 membrane-spanning stretches (helical) occupy residues tyrosine 34–methionine 54, tryptophan 78–isoleucine 99, tryptophan 114–leucine 134, and phenylalanine 179–leucine 199. Histidine 84 and histidine 98 together coordinate heme b. Heme b is bound by residues histidine 183 and histidine 197. Histidine 202 serves as a coordination point for a ubiquinone. 4 consecutive transmembrane segments (helical) span residues tyrosine 227 to asparagine 247, leucine 289 to histidine 309, leucine 321 to glycine 341, and phenylalanine 348 to proline 368.

Belongs to the cytochrome b family. In terms of assembly, the cytochrome bc1 complex contains 3 respiratory subunits (MT-CYB, CYC1 and UQCRFS1), 2 core proteins (UQCRC1 and UQCRC2) and probably 6 low-molecular weight proteins. It depends on heme b as a cofactor.

It is found in the mitochondrion inner membrane. In terms of biological role, component of the ubiquinol-cytochrome c reductase complex (complex III or cytochrome b-c1 complex) that is part of the mitochondrial respiratory chain. The b-c1 complex mediates electron transfer from ubiquinol to cytochrome c. Contributes to the generation of a proton gradient across the mitochondrial membrane that is then used for ATP synthesis. The chain is Cytochrome b (mt-cyb) from Typhlonectes natans (Rubber eel).